We begin with the raw amino-acid sequence, 236 residues long: Chorionic somatomammotropin hormone 1 (236 aa).

The N-terminal stretch at 1-36 (MAPASSHRGHQWICDLVRGSCLLLLLVVSNLLLCQG) is a signal peptide. A glycan (N-linked (GlcNAc...) asparagine) is linked at Asn89. Disulfide bonds link Cys98–Cys214 and Cys231–Cys236.

It belongs to the somatotropin/prolactin family.

The protein localises to the secreted. The polypeptide is Chorionic somatomammotropin hormone 1 (CSH1) (Bos taurus (Bovine)).